Consider the following 372-residue polypeptide: Fatty acid 2-hydroxylase (372 aa).

Residues 8–86 (AASFSPSEVQ…LEQYYVGELR (79 aa)) enclose the Cytochrome b5 heme-binding domain. The heme site is built by His-43 and His-69. The next 2 helical transmembrane spans lie at 168 to 188 (VWYSVPIIWVPLVLYLSWSYY) and 213 to 233 (SMFPGLFMLGIFLWSLIEYLI). Residues 219-361 (FMLGIFLWSL…TKLWDYCFHT (143 aa)) form the Fatty acid hydroxylase domain. Positions 234, 239, 257, 260, and 261 each coordinate Zn(2+). The next 2 membrane-spanning stretches (helical) occupy residues 271–291 (VFPPVPASLVIGVFYLCLQLI) and 292–312 (LPEAVGGTVFAGGLLGYVLYD). His-315, His-319, His-336, His-339, and His-340 together coordinate Zn(2+).

The protein belongs to the sterol desaturase family. SCS7 subfamily. Zn(2+) is required as a cofactor.

The protein localises to the endoplasmic reticulum membrane. Its subcellular location is the microsome membrane. It carries out the reaction a 1,2-saturated fatty acid + 2 Fe(II)-[cytochrome b5] + O2 + 2 H(+) = a (R)-2-hydroxy fatty acid + 2 Fe(III)-[cytochrome b5] + H2O. It catalyses the reaction hexadecanoate + 2 Fe(II)-[cytochrome b5] + O2 + 2 H(+) = (R)-2-hydroxyhexadecanoate + 2 Fe(III)-[cytochrome b5] + H2O. The catalysed reaction is octadecanoate + 2 Fe(II)-[cytochrome b5] + O2 + 2 H(+) = (R)-2-hydroxyoctadecanoate + 2 Fe(III)-[cytochrome b5] + H2O. The enzyme catalyses docosanoate + 2 Fe(II)-[cytochrome b5] + O2 + 2 H(+) = 2-hydroxydocosanoate + 2 Fe(III)-[cytochrome b5] + H2O. It carries out the reaction tetracosanoate + 2 Fe(II)-[cytochrome b5] + O2 + 2 H(+) = (R)-2-hydroxytetracosanoate + 2 Fe(III)-[cytochrome b5] + H2O. The protein operates within lipid metabolism; fatty acid metabolism. It functions in the pathway sphingolipid metabolism; galactosylceramide biosynthesis. Catalyzes the hydroxylation of free fatty acids at the C-2 position to produce 2-hydroxy fatty acids, which are building blocks of sphingolipids and glycosphingolipids common in neural tissue and epidermis. FA2H is stereospecific for the production of (R)-2-hydroxy fatty acids. Plays an essential role in the synthesis of galactosphingolipids of the myelin sheath. Responsible for the synthesis of sphingolipids and glycosphingolipids involved in the formation of epidermal lamellar bodies critical for skin permeability barrier. Participates in the synthesis of glycosphingolipids and a fraction of type II wax diesters in sebaceous gland, specifically regulating hair follicle homeostasis. Involved in the synthesis of sphingolipids of plasma membrane rafts, controlling lipid raft mobility and trafficking of raft-associated proteins. This Macaca fascicularis (Crab-eating macaque) protein is Fatty acid 2-hydroxylase (FA2H).